The chain runs to 214 residues: Adenylate kinase (214 aa).

Position 10–15 (glycine 10–threonine 15) interacts with ATP. The tract at residues serine 30–valine 59 is NMP. AMP is bound by residues threonine 31, arginine 36, lysine 57 to valine 59, glycine 85 to arginine 88, and glutamine 92. An LID region spans residues glycine 122 to aspartate 159. ATP is bound by residues arginine 123 and serine 132 to tyrosine 133. AMP-binding residues include arginine 156 and arginine 167. Glutamine 200 is an ATP binding site.

It belongs to the adenylate kinase family. In terms of assembly, monomer.

The protein localises to the cytoplasm. It carries out the reaction AMP + ATP = 2 ADP. The protein operates within purine metabolism; AMP biosynthesis via salvage pathway; AMP from ADP: step 1/1. Catalyzes the reversible transfer of the terminal phosphate group between ATP and AMP. Plays an important role in cellular energy homeostasis and in adenine nucleotide metabolism. It may be linked to the biosynthesis of lipopolysaccharide surface molecules, which are important for the pathogenesis of H.influenzae. The polypeptide is Adenylate kinase (Haemophilus influenzae (strain ATCC 51907 / DSM 11121 / KW20 / Rd)).